We begin with the raw amino-acid sequence, 204 residues long: Imidazoleglycerol-phosphate dehydratase (204 aa).

It belongs to the imidazoleglycerol-phosphate dehydratase family.

It is found in the cytoplasm. It carries out the reaction D-erythro-1-(imidazol-4-yl)glycerol 3-phosphate = 3-(imidazol-4-yl)-2-oxopropyl phosphate + H2O. Its pathway is amino-acid biosynthesis; L-histidine biosynthesis; L-histidine from 5-phospho-alpha-D-ribose 1-diphosphate: step 6/9. The protein is Imidazoleglycerol-phosphate dehydratase of Corynebacterium jeikeium (strain K411).